Here is a 157-residue protein sequence, read N- to C-terminus: Protein Smg (157 aa).

Belongs to the Smg family.

This chain is Protein Smg, found in Escherichia coli O139:H28 (strain E24377A / ETEC).